A 481-amino-acid polypeptide reads, in one-letter code: CUGBP Elav-like family member 6 (481 aa).

Low complexity predominate over residues 1–12 (MAAAPGGSAQPA). The interval 1-34 (MAAAPGGSAQPAGPGPRLGFSTADSGVGMSGLNP) is disordered. RRM domains are found at residues 46 to 127 (IKLF…PAAS), 134 to 214 (RKLF…LADT), and 396 to 474 (CNLF…LKRP).

This sequence belongs to the CELF/BRUNOL family. As to expression, expressed mainly in kidney, brain and testis and present in other tissues albeit at lower levels. Also expressed in fetal kidney.

The protein resides in the nucleus. The protein localises to the cytoplasm. RNA-binding protein implicated in the regulation of pre-mRNA alternative splicing. Mediates exon inclusion and/or exclusion in pre-mRNA that are subject to tissue-specific and developmentally regulated alternative splicing. Specifically activates exon 5 inclusion of TNNT2 in a muscle-specific splicing enhancer (MSE)-dependent manner. Promotes also exon exclusion of INSR pre-mRNA. The sequence is that of CUGBP Elav-like family member 6 (CELF6) from Homo sapiens (Human).